Consider the following 232-residue polypeptide: uncharacterized protein (232 aa).

Basic and acidic residues predominate over residues 86–95 (RGLPRPEFKA). Residues 86–107 (RGLPRPEFKANGHPSMDAEADD) are disordered.

This is an uncharacterized protein from Sinorhizobium fredii (strain NBRC 101917 / NGR234).